The chain runs to 179 residues: Adenine phosphoribosyltransferase (179 aa).

This sequence belongs to the purine/pyrimidine phosphoribosyltransferase family. Homodimer.

The protein localises to the cytoplasm. The catalysed reaction is AMP + diphosphate = 5-phospho-alpha-D-ribose 1-diphosphate + adenine. Its pathway is purine metabolism; AMP biosynthesis via salvage pathway; AMP from adenine: step 1/1. Its function is as follows. Catalyzes a salvage reaction resulting in the formation of AMP, that is energically less costly than de novo synthesis. The polypeptide is Adenine phosphoribosyltransferase (Bradyrhizobium sp. (strain BTAi1 / ATCC BAA-1182)).